We begin with the raw amino-acid sequence, 120 residues long: MFTLPGYDAFLGFLLISAAVPALALVTNKLISPKSQPGERELTYESGMEPIGGAWIQFNIRYYMFALVFVIFDVETVFLYPWAVAFHKLGLLAFIEALIFISILIVALAYAWRKGALEWS.

Transmembrane regions (helical) follow at residues 6–26 (GYDA…LALV), 64–84 (MFAL…PWAV), and 89–109 (LGLL…VALA).

The protein belongs to the complex I subunit 3 family. As to quaternary structure, NDH-1 can be composed of about 15 different subunits; different subcomplexes with different compositions have been identified which probably have different functions.

Its subcellular location is the cellular thylakoid membrane. The catalysed reaction is a plastoquinone + NADH + (n+1) H(+)(in) = a plastoquinol + NAD(+) + n H(+)(out). It carries out the reaction a plastoquinone + NADPH + (n+1) H(+)(in) = a plastoquinol + NADP(+) + n H(+)(out). Functionally, NDH-1 shuttles electrons from an unknown electron donor, via FMN and iron-sulfur (Fe-S) centers, to quinones in the respiratory and/or the photosynthetic chain. The immediate electron acceptor for the enzyme in this species is believed to be plastoquinone. Couples the redox reaction to proton translocation, and thus conserves the redox energy in a proton gradient. Cyanobacterial NDH-1 also plays a role in inorganic carbon-concentration. This is NAD(P)H-quinone oxidoreductase subunit 3 from Prochlorococcus marinus (strain SARG / CCMP1375 / SS120).